We begin with the raw amino-acid sequence, 473 residues long: 3-isopropylmalate dehydratase large subunit (473 aa).

Positions 355, 415, and 418 each coordinate [4Fe-4S] cluster. Residues 423–452 (PDQLAPGERSASTSNRNFEGRQGKGGRTHL) form a disordered region.

Belongs to the aconitase/IPM isomerase family. LeuC type 1 subfamily. Heterodimer of LeuC and LeuD. [4Fe-4S] cluster serves as cofactor.

It carries out the reaction (2R,3S)-3-isopropylmalate = (2S)-2-isopropylmalate. It participates in amino-acid biosynthesis; L-leucine biosynthesis; L-leucine from 3-methyl-2-oxobutanoate: step 2/4. Its function is as follows. Catalyzes the isomerization between 2-isopropylmalate and 3-isopropylmalate, via the formation of 2-isopropylmaleate. The polypeptide is 3-isopropylmalate dehydratase large subunit (Corynebacterium jeikeium (strain K411)).